The primary structure comprises 522 residues: Probable protein kinase UbiB (522 aa).

Residues 119–497 (SFERVPVASA…QRRTNRLLQS (379 aa)) form the Protein kinase domain. Residues 125 to 133 (VASASIAQV) and K151 each bind ATP. Catalysis depends on D286, which acts as the Proton acceptor. A helical membrane pass occupies residues 496–516 (QSIIYGGMGFVLGLLALQFLI).

This sequence belongs to the ABC1 family. UbiB subfamily.

It localises to the cell inner membrane. The protein operates within cofactor biosynthesis; ubiquinone biosynthesis [regulation]. Its function is as follows. Is probably a protein kinase regulator of UbiI activity which is involved in aerobic coenzyme Q (ubiquinone) biosynthesis. The chain is Probable protein kinase UbiB from Paracidovorax citrulli (strain AAC00-1) (Acidovorax citrulli).